We begin with the raw amino-acid sequence, 200 residues long: ATP-dependent Clp protease proteolytic subunit 3 (200 aa).

The active-site Nucleophile is Ser101. The active site involves His126.

The protein belongs to the peptidase S14 family. Fourteen ClpP subunits assemble into 2 heptameric rings which stack back to back to give a disk-like structure with a central cavity, resembling the structure of eukaryotic proteasomes.

The protein localises to the cytoplasm. It catalyses the reaction Hydrolysis of proteins to small peptides in the presence of ATP and magnesium. alpha-casein is the usual test substrate. In the absence of ATP, only oligopeptides shorter than five residues are hydrolyzed (such as succinyl-Leu-Tyr-|-NHMec, and Leu-Tyr-Leu-|-Tyr-Trp, in which cleavage of the -Tyr-|-Leu- and -Tyr-|-Trp bonds also occurs).. In terms of biological role, cleaves peptides in various proteins in a process that requires ATP hydrolysis. Has a chymotrypsin-like activity. Plays a major role in the degradation of misfolded proteins. The polypeptide is ATP-dependent Clp protease proteolytic subunit 3 (Parasynechococcus marenigrum (strain WH8102)).